The primary structure comprises 271 residues: Imidazole glycerol phosphate synthase subunit HisF (271 aa).

Residues Asp-12 and Asp-136 contribute to the active site.

It belongs to the HisA/HisF family. Heterodimer of HisH and HisF.

Its subcellular location is the cytoplasm. The catalysed reaction is 5-[(5-phospho-1-deoxy-D-ribulos-1-ylimino)methylamino]-1-(5-phospho-beta-D-ribosyl)imidazole-4-carboxamide + L-glutamine = D-erythro-1-(imidazol-4-yl)glycerol 3-phosphate + 5-amino-1-(5-phospho-beta-D-ribosyl)imidazole-4-carboxamide + L-glutamate + H(+). It participates in amino-acid biosynthesis; L-histidine biosynthesis; L-histidine from 5-phospho-alpha-D-ribose 1-diphosphate: step 5/9. IGPS catalyzes the conversion of PRFAR and glutamine to IGP, AICAR and glutamate. The HisF subunit catalyzes the cyclization activity that produces IGP and AICAR from PRFAR using the ammonia provided by the HisH subunit. This chain is Imidazole glycerol phosphate synthase subunit HisF, found in Natronomonas pharaonis (strain ATCC 35678 / DSM 2160 / CIP 103997 / JCM 8858 / NBRC 14720 / NCIMB 2260 / Gabara) (Halobacterium pharaonis).